A 480-amino-acid chain; its full sequence is ATP synthase subunit beta (480 aa).

Position 154–161 (154–161 (GGAGVGKT)) interacts with ATP.

It belongs to the ATPase alpha/beta chains family. As to quaternary structure, F-type ATPases have 2 components, CF(1) - the catalytic core - and CF(0) - the membrane proton channel. CF(1) has five subunits: alpha(3), beta(3), gamma(1), delta(1), epsilon(1). CF(0) has four main subunits: a(1), b(1), b'(1) and c(9-12).

Its subcellular location is the cell inner membrane. The enzyme catalyses ATP + H2O + 4 H(+)(in) = ADP + phosphate + 5 H(+)(out). In terms of biological role, produces ATP from ADP in the presence of a proton gradient across the membrane. The catalytic sites are hosted primarily by the beta subunits. The protein is ATP synthase subunit beta of Bradyrhizobium sp. (strain ORS 278).